A 120-amino-acid chain; its full sequence is Chaperonin GroEL (120 aa).

23-27 (DGTTT) provides a ligand contact to ATP.

This sequence belongs to the chaperonin (HSP60) family. As to quaternary structure, forms a cylinder of 14 subunits composed of two heptameric rings stacked back-to-back. Interacts with the co-chaperonin GroES.

The protein localises to the cytoplasm. It carries out the reaction ATP + H2O + a folded polypeptide = ADP + phosphate + an unfolded polypeptide.. Functionally, together with its co-chaperonin GroES, plays an essential role in assisting protein folding. The GroEL-GroES system forms a nano-cage that allows encapsulation of the non-native substrate proteins and provides a physical environment optimized to promote and accelerate protein folding. The chain is Chaperonin GroEL from Mycobacterium kansasii.